Reading from the N-terminus, the 237-residue chain is GCN5-related N-acetyltransferase 3, chloroplastic (237 aa).

Residues methionine 1–valine 93 constitute a chloroplast transit peptide. The region spanning serine 94–alanine 237 is the N-acetyltransferase domain. Acetyl-CoA-binding positions include leucine 171 to valine 173, arginine 179 to lysine 184, phenylalanine 207 to aspartate 209, and phenylalanine 214.

This sequence belongs to the acetyltransferase family. GNAT subfamily. As to quaternary structure, oligomer. Post-translationally, autoacetylated. In terms of tissue distribution, expressed in green tissues.

It is found in the plastid. The protein resides in the chloroplast. The enzyme catalyses an N-terminal L-alpha-aminoacyl-[protein] + acetyl-CoA = N-terminal N(alpha)-acetyl-L-alpha-aminoacyl-[protein] + CoA + H(+). It catalyses the reaction L-lysyl-[protein] + acetyl-CoA = N(6)-acetyl-L-lysyl-[protein] + CoA + H(+). Functionally, protein acetyltransferase with dual specificity triggering both N-alpha-acetylation (NTA) and epsilon-lysine acetylation (KA), possibly with a low efficiency or toward specific plastid substrates. This chain is GCN5-related N-acetyltransferase 3, chloroplastic, found in Arabidopsis thaliana (Mouse-ear cress).